The chain runs to 1052 residues: Eukaryotic translation initiation factor 3 subunit A (1052 aa).

In terms of domain architecture, PCI spans 325 to 505; the sequence is IQYAASAVLL…GSLHFNNNIF (181 aa). 2 coiled-coil regions span residues 568 to 712 and 769 to 882; these read REHV…RLRE and EKTA…SAQT. 2 stretches are compositionally biased toward basic and acidic residues: residues 570–600 and 793–874; these read HVSN…EQMQ and KIRL…EQEK. Disordered stretches follow at residues 570–606 and 793–1052; these read HVSN…HQNQ and KIRL…DDKN. Polar residues-rich tracts occupy residues 875-887 and 895-906; these read LSNL…QPTW and APTTAAPSSMRV. Composition is skewed to basic and acidic residues over residues 942–952, 960–970, 979–1013, and 1037–1052; these read DRGDRAPRDTG, RAPR…ERRA, and GSER…DDKN.

This sequence belongs to the eIF-3 subunit A family. In terms of assembly, component of the eukaryotic translation initiation factor 3 (eIF-3) complex.

It is found in the cytoplasm. In terms of biological role, RNA-binding component of the eukaryotic translation initiation factor 3 (eIF-3) complex, which is involved in protein synthesis of a specialized repertoire of mRNAs and, together with other initiation factors, stimulates binding of mRNA and methionyl-tRNAi to the 40S ribosome. The eIF-3 complex specifically targets and initiates translation of a subset of mRNAs involved in cell proliferation. The chain is Eukaryotic translation initiation factor 3 subunit A from Monosiga brevicollis (Choanoflagellate).